Reading from the N-terminus, the 302-residue chain is Protein translocase subunit SecF (302 aa).

The next 6 helical transmembrane spans lie at 12–32 (FFIY…FVKG), 138–158 (YAWY…TIRF), 166–186 (AILA…LFGI), 190–210 (LTAI…TIVV), 249–269 (FLVV…FAFG), and 272–292 (VGVI…VIGM).

This sequence belongs to the SecD/SecF family. SecF subfamily. As to quaternary structure, forms a complex with SecD. Part of the essential Sec protein translocation apparatus which comprises SecA, SecYEG and auxiliary proteins SecDF. Other proteins may also be involved.

The protein localises to the cell inner membrane. Functionally, part of the Sec protein translocase complex. Interacts with the SecYEG preprotein conducting channel. SecDF uses the proton motive force (PMF) to complete protein translocation after the ATP-dependent function of SecA. The protein is Protein translocase subunit SecF of Petrotoga mobilis (strain DSM 10674 / SJ95).